Here is a 333-residue protein sequence, read N- to C-terminus: Heat shock transcription factor, X-linked member 3 (333 aa).

Residues 1 to 66 (MASQNTEQEY…QDNSPPEDRN (66 aa)) form a disordered region. A compositionally biased stretch (low complexity) spans 29-39 (GSSPDPNPDSS). Over residues 49 to 60 (AMSQDPGSQDNS) the composition is skewed to polar residues. A DNA-binding region spans residues 79-182 (FRLSFPRKLW…PRLLENIQRK (104 aa)). Residues 227–275 (QGAPSVQGPSGTQSFRRSGMWSKKSATRHPLGNGPPQEPNGPSWEGTSG) form a disordered region. The segment covering 228–242 (GAPSVQGPSGTQSFR) has biased composition (polar residues).

The protein belongs to the HSF family.

It localises to the nucleus. The protein is Heat shock transcription factor, X-linked member 3 of Homo sapiens (Human).